The chain runs to 252 residues: UPF0246 protein Fjoh_4905 (252 aa).

The protein belongs to the UPF0246 family.

This is UPF0246 protein Fjoh_4905 from Flavobacterium johnsoniae (strain ATCC 17061 / DSM 2064 / JCM 8514 / BCRC 14874 / CCUG 350202 / NBRC 14942 / NCIMB 11054 / UW101) (Cytophaga johnsonae).